The primary structure comprises 275 residues: Exosome complex component Rrp42 (275 aa).

Belongs to the RNase PH family. Rrp42 subfamily. As to quaternary structure, component of the archaeal exosome complex. Forms a hexameric ring-like arrangement composed of 3 Rrp41-Rrp42 heterodimers. The hexameric ring associates with a trimer of Rrp4 and/or Csl4 subunits.

The protein resides in the cytoplasm. Its function is as follows. Non-catalytic component of the exosome, which is a complex involved in RNA degradation. Contributes to the structuring of the Rrp41 active site. In Saccharolobus solfataricus (strain ATCC 35092 / DSM 1617 / JCM 11322 / P2) (Sulfolobus solfataricus), this protein is Exosome complex component Rrp42.